The chain runs to 236 residues: Eukaryotic translation initiation factor 3 subunit K (236 aa).

The PCI domain maps to 42–222 (YDKDILVTTL…TIKSRNIEEK (181 aa)).

It belongs to the eIF-3 subunit K family. In terms of assembly, component of the eukaryotic translation initiation factor 3 (eIF-3) complex.

Its subcellular location is the cytoplasm. Component of the eukaryotic translation initiation factor 3 (eIF-3) complex, which is involved in protein synthesis of a specialized repertoire of mRNAs and, together with other initiation factors, stimulates binding of mRNA and methionyl-tRNAi to the 40S ribosome. The eIF-3 complex specifically targets and initiates translation of a subset of mRNAs involved in cell proliferation. The polypeptide is Eukaryotic translation initiation factor 3 subunit K (Brugia malayi (Filarial nematode worm)).